Here is a 479-residue protein sequence, read N- to C-terminus: MMKMKQQGLVADLLPNIRVMKFFGHFVFNYYDDNSSKYLHKIFCCVNLFLLLLQFALCAVNLIIESADVDDLTANTITLLFFTHSIVKIIYFAVRSKYFYRTWAIWNNPNSHPLFAESNARYHAIALKKMRLLLFLVGATTVLSAIAWTVLTFFEHPIRKLVDPVTNETTIIELPQLLLRSYYPFDASKGIMHVIVLIYQFYWVLFMLIDANSLDVLFCSWLLFACEQLQHLKQIMKPLMELSATLDTVVPNSSELFKAGSAEHLRESENQPPPPVPPQGDSMLDLDLRNIYSNRQDFTATFRPTAGMTFNGGVGPNGLTKKQEMLVRSAIKYWVERHKHIVRLVTAVGDAYGFALLLHMLTTTITLTLLAYQATKVNGVNVYAASTIGYIIYTFGQVFLFCIFGNRLIEESTSVMEAAYSCHWYDGSEEAKTFVQIVCQQCQKAMSISGAKFFTVSLDLFASVLGAVVTYFMVLVQLK.

Topologically, residues 1 to 43 (MMKMKQQGLVADLLPNIRVMKFFGHFVFNYYDDNSSKYLHKIF) are cytoplasmic. The chain crosses the membrane as a helical span at residues 44–64 (CCVNLFLLLLQFALCAVNLII). Residues 65–73 (ESADVDDLT) lie on the Extracellular side of the membrane. Residues 74–94 (ANTITLLFFTHSIVKIIYFAV) form a helical membrane-spanning segment. At 95-133 (RSKYFYRTWAIWNNPNSHPLFAESNARYHAIALKKMRLL) the chain is on the cytoplasmic side. The chain crosses the membrane as a helical span at residues 134–154 (LFLVGATTVLSAIAWTVLTFF). At 155 to 190 (EHPIRKLVDPVTNETTIIELPQLLLRSYYPFDASKG) the chain is on the extracellular side. N-linked (GlcNAc...) asparagine glycosylation is present at N167. Residues 191 to 211 (IMHVIVLIYQFYWVLFMLIDA) traverse the membrane as a helical segment. At 212 to 350 (NSLDVLFCSW…IVRLVTAVGD (139 aa)) the chain is on the cytoplasmic side. A disordered region spans residues 261 to 280 (SAEHLRESENQPPPPVPPQG). Residues 351-371 (AYGFALLLHMLTTTITLTLLA) form a helical membrane-spanning segment. Residues 372–383 (YQATKVNGVNVY) lie on the Extracellular side of the membrane. Residues 384 to 404 (AASTIGYIIYTFGQVFLFCIF) form a helical membrane-spanning segment. The Cytoplasmic portion of the chain corresponds to 405–455 (GNRLIEESTSVMEAAYSCHWYDGSEEAKTFVQIVCQQCQKAMSISGAKFFT). The helical transmembrane segment at 456–476 (VSLDLFASVLGAVVTYFMVLV) threads the bilayer. Residues 477-479 (QLK) lie on the Extracellular side of the membrane.

This sequence belongs to the insect chemoreceptor superfamily. Heteromeric odorant receptor channel (TC 1.A.69) family. Orco subfamily. As to quaternary structure, heterodimer with conventional odorant receptors (ORs).

Its subcellular location is the cell membrane. Its function is as follows. Odorant coreceptor which complexes with conventional odorant receptors (ORs) to form odorant-sensing units, providing sensitive and prolonged odorant signaling and calcium permeability. Obligate coreceptor of all odorant receptors. Orco is a universal and integral part of the functional odorant receptor, involved in the dendritic localization of other olfactory receptors. Can form functional ion channels in the absence of an odor-binding odorant receptor. Plays a central role in the perception of olfactory stimuli in ants and is essential for ant social organization. Required for pheromone sensing and mating behavior. Also required for the development and maintenance of odorant receptor neurons (ORNs) and of antennal lobe glomeruli. The protein is Odorant receptor coreceptor of Harpegnathos saltator (Jerdon's jumping ant).